The primary structure comprises 63 residues: Large ribosomal subunit protein bL35 (63 aa).

It belongs to the bacterial ribosomal protein bL35 family.

This is Large ribosomal subunit protein bL35 from Campylobacter jejuni subsp. doylei (strain ATCC BAA-1458 / RM4099 / 269.97).